The following is a 419-amino-acid chain: Acyl-coenzyme A thioesterase 1 (419 aa).

Residues Ser-232, Asp-324, and His-358 each act as charge relay system in the active site. Phosphoserine is present on Ser-416.

Belongs to the C/M/P thioester hydrolase family. Monomer. As to expression, expressed in heart, kidney, brown adipose tissue, white adipose tissue, adrenal gland and muscle.

It is found in the cytoplasm. The protein resides in the cytosol. The enzyme catalyses hexadecanoyl-CoA + H2O = hexadecanoate + CoA + H(+). It catalyses the reaction decanoyl-CoA + H2O = decanoate + CoA + H(+). The catalysed reaction is dodecanoyl-CoA + H2O = dodecanoate + CoA + H(+). It carries out the reaction tetradecanoyl-CoA + H2O = tetradecanoate + CoA + H(+). The enzyme catalyses octadecanoyl-CoA + H2O = octadecanoate + CoA + H(+). It catalyses the reaction eicosanoyl-CoA + H2O = eicosanoate + CoA + H(+). The catalysed reaction is (9Z)-octadecenoyl-CoA + H2O = (9Z)-octadecenoate + CoA + H(+). It carries out the reaction (9Z)-hexadecenoyl-CoA + H2O = (9Z)-hexadecenoate + CoA + H(+). The enzyme catalyses (9E)-octadecenoyl-CoA + H2O = (9E)-octadecenoate + CoA + H(+). Its pathway is lipid metabolism; fatty acid metabolism. Its function is as follows. Catalyzes the hydrolysis of acyl-CoAs into free fatty acids and coenzyme A (CoASH), regulating their respective intracellular levels. More active towards saturated and unsaturated long chain fatty acyl-CoAs (C12-C20). In Mus musculus (Mouse), this protein is Acyl-coenzyme A thioesterase 1 (Acot1).